A 280-amino-acid chain; its full sequence is DCN1-like protein 4 (280 aa).

Residues 37 to 71 (GPESHGTACCSRAMPPRKKRRPTAGDDLSAKKSRQ) are disordered. Residues 89–275 (FSSKRCLEWF…LLDEFVEWYK (187 aa)) form the DCUN1 domain.

May interact (via the DCUN1 domain) with unneddylated cullins.

The protein resides in the nucleus. Functionally, contributes to the neddylation of all cullins by transferring NEDD8 from N-terminally acetylated NEDD8-conjugating E2s enzyme to different cullin C-terminal domain-RBX complexes. This chain is DCN1-like protein 4, found in Danio rerio (Zebrafish).